We begin with the raw amino-acid sequence, 355 residues long: UDP-3-O-acylglucosamine N-acyltransferase (355 aa).

Catalysis depends on H258, which acts as the Proton acceptor.

Belongs to the transferase hexapeptide repeat family. LpxD subfamily. Homotrimer.

It catalyses the reaction a UDP-3-O-[(3R)-3-hydroxyacyl]-alpha-D-glucosamine + a (3R)-hydroxyacyl-[ACP] = a UDP-2-N,3-O-bis[(3R)-3-hydroxyacyl]-alpha-D-glucosamine + holo-[ACP] + H(+). It participates in bacterial outer membrane biogenesis; LPS lipid A biosynthesis. Its function is as follows. Catalyzes the N-acylation of UDP-3-O-acylglucosamine using 3-hydroxyacyl-ACP as the acyl donor. Is involved in the biosynthesis of lipid A, a phosphorylated glycolipid that anchors the lipopolysaccharide to the outer membrane of the cell. The chain is UDP-3-O-acylglucosamine N-acyltransferase from Bradyrhizobium sp. (strain ORS 278).